Consider the following 451-residue polypeptide: Tubulin alpha chain (451 aa).

A GTP-binding site is contributed by Gln11. Lys40 bears the N6-acetyllysine mark. Residues Glu71, Gly144, Thr145, Thr179, Asn206, and Asn228 each contribute to the GTP site. Position 71 (Glu71) interacts with Mg(2+). Glu254 is an active-site residue.

It belongs to the tubulin family. Dimer of alpha and beta chains. A typical microtubule is a hollow water-filled tube with an outer diameter of 25 nm and an inner diameter of 15 nM. Alpha-beta heterodimers associate head-to-tail to form protofilaments running lengthwise along the microtubule wall with the beta-tubulin subunit facing the microtubule plus end conferring a structural polarity. Microtubules usually have 13 protofilaments but different protofilament numbers can be found in some organisms and specialized cells. Mg(2+) serves as cofactor. In terms of processing, undergoes a tyrosination/detyrosination cycle, the cyclic removal and re-addition of a C-terminal tyrosine residue by the enzymes tubulin tyrosine carboxypeptidase (TTCP) and tubulin tyrosine ligase (TTL), respectively. Acetylation of alpha chains at Lys-40 stabilizes microtubules and affects affinity and processivity of microtubule motors. This modification has a role in multiple cellular functions, ranging from cell motility, cell cycle progression or cell differentiation to intracellular trafficking and signaling.

Its subcellular location is the cytoplasm. The protein localises to the cytoskeleton. It carries out the reaction GTP + H2O = GDP + phosphate + H(+). Functionally, tubulin is the major constituent of microtubules, a cylinder consisting of laterally associated linear protofilaments composed of alpha- and beta-tubulin heterodimers. Microtubules grow by the addition of GTP-tubulin dimers to the microtubule end, where a stabilizing cap forms. Below the cap, tubulin dimers are in GDP-bound state, owing to GTPase activity of alpha-tubulin. The chain is Tubulin alpha chain from Trypanosoma cruzi.